Consider the following 699-residue polypeptide: SHC SH2 domain-binding protein 1 homolog A (699 aa).

PbH1 repeat units lie at residues Ser480 to Pro502, Gly503 to Asp524, and Ile532 to Lys554. Residues Ala603–Glu627 adopt a coiled-coil conformation.

Its subcellular location is the midbody. The protein resides in the cytoplasm. It localises to the cytoskeleton. The protein localises to the spindle. May play a role in signaling pathways governing cellular proliferation. The chain is SHC SH2 domain-binding protein 1 homolog A (shcbp1-a) from Xenopus laevis (African clawed frog).